Here is a 315-residue protein sequence, read N- to C-terminus: MEVIKITPRGYCYGVVDAMVIARNAALNPTLPRPIYILGMIVHNKHVTDAFEEEGIITLDGPNRLEILENIDHGTVIFTAHGVSPEVKQRAREKGLVTIDATCPDVTKTHDLIREKVENGYEVIYIGKKGHPEPEGAIGVAPHAVHLIETPEDVEQLDIQSKRIIVTNQTTMSQWDVAHIMEKVKEKYPHVEMHREICLATQVRQEAVAEQAKEADVTIVVGDPRSNNSNRLAQVSEEIAGTKAYRVSDVTEIDIEWIKDAKKVAVTAGASTPTPITKEVIDFLEQFDPNNPETWKRERKVPLTKILPKVKKRGE.

Residue cysteine 12 participates in [4Fe-4S] cluster binding. (2E)-4-hydroxy-3-methylbut-2-enyl diphosphate is bound by residues histidine 43 and histidine 81. Dimethylallyl diphosphate-binding residues include histidine 43 and histidine 81. Histidine 43 and histidine 81 together coordinate isopentenyl diphosphate. Cysteine 103 is a [4Fe-4S] cluster binding site. Histidine 131 lines the (2E)-4-hydroxy-3-methylbut-2-enyl diphosphate pocket. Histidine 131 lines the dimethylallyl diphosphate pocket. Residue histidine 131 coordinates isopentenyl diphosphate. Glutamate 133 functions as the Proton donor in the catalytic mechanism. Threonine 170 serves as a coordination point for (2E)-4-hydroxy-3-methylbut-2-enyl diphosphate. Cysteine 198 contacts [4Fe-4S] cluster. Serine 226, asparagine 228, and serine 271 together coordinate (2E)-4-hydroxy-3-methylbut-2-enyl diphosphate. Dimethylallyl diphosphate is bound by residues serine 226, asparagine 228, and serine 271. Residues serine 226, asparagine 228, and serine 271 each contribute to the isopentenyl diphosphate site.

It belongs to the IspH family. It depends on [4Fe-4S] cluster as a cofactor.

It catalyses the reaction isopentenyl diphosphate + 2 oxidized [2Fe-2S]-[ferredoxin] + H2O = (2E)-4-hydroxy-3-methylbut-2-enyl diphosphate + 2 reduced [2Fe-2S]-[ferredoxin] + 2 H(+). The catalysed reaction is dimethylallyl diphosphate + 2 oxidized [2Fe-2S]-[ferredoxin] + H2O = (2E)-4-hydroxy-3-methylbut-2-enyl diphosphate + 2 reduced [2Fe-2S]-[ferredoxin] + 2 H(+). It participates in isoprenoid biosynthesis; dimethylallyl diphosphate biosynthesis; dimethylallyl diphosphate from (2E)-4-hydroxy-3-methylbutenyl diphosphate: step 1/1. It functions in the pathway isoprenoid biosynthesis; isopentenyl diphosphate biosynthesis via DXP pathway; isopentenyl diphosphate from 1-deoxy-D-xylulose 5-phosphate: step 6/6. Its function is as follows. Catalyzes the conversion of 1-hydroxy-2-methyl-2-(E)-butenyl 4-diphosphate (HMBPP) into a mixture of isopentenyl diphosphate (IPP) and dimethylallyl diphosphate (DMAPP). Acts in the terminal step of the DOXP/MEP pathway for isoprenoid precursor biosynthesis. In Anoxybacillus flavithermus (strain DSM 21510 / WK1), this protein is 4-hydroxy-3-methylbut-2-enyl diphosphate reductase.